The sequence spans 407 residues: Imidazolonepropionase (407 aa).

Fe(3+)-binding residues include His68 and His70. Residues His68 and His70 each contribute to the Zn(2+) site. 4-imidazolone-5-propanoate contacts are provided by Arg77, Tyr140, and His173. Tyr140 serves as a coordination point for N-formimidoyl-L-glutamate. His238 contacts Fe(3+). His238 is a binding site for Zn(2+). Gln241 is a binding site for 4-imidazolone-5-propanoate. Asp313 lines the Fe(3+) pocket. Asp313 contributes to the Zn(2+) binding site. The N-formimidoyl-L-glutamate site is built by Asn315 and Gly317. Thr318 provides a ligand contact to 4-imidazolone-5-propanoate.

The protein belongs to the metallo-dependent hydrolases superfamily. HutI family. Zn(2+) serves as cofactor. Fe(3+) is required as a cofactor.

It is found in the cytoplasm. It catalyses the reaction 4-imidazolone-5-propanoate + H2O = N-formimidoyl-L-glutamate. Its pathway is amino-acid degradation; L-histidine degradation into L-glutamate; N-formimidoyl-L-glutamate from L-histidine: step 3/3. In terms of biological role, catalyzes the hydrolytic cleavage of the carbon-nitrogen bond in imidazolone-5-propanoate to yield N-formimidoyl-L-glutamate. It is the third step in the universal histidine degradation pathway. The sequence is that of Imidazolonepropionase from Burkholderia cenocepacia (strain HI2424).